Here is a 334-residue protein sequence, read N- to C-terminus: Gap junction alpha-2 protein (334 aa).

Residues 1 to 12 (MAGWELLKLLLD) lie on the Cytoplasmic side of the membrane. Residues 13 to 35 (DVQEHSTLIGKVWLTVLFIFRIF) traverse the membrane as a helical segment. Residues 36–75 (ILSVAGESVWTDEQSDFICNTQQPGCTNVCYDQAFPISHV) are Extracellular-facing. The chain crosses the membrane as a helical span at residues 76-98 (RYWVLQFLFVSTPTLIYLGHMVY). The Cytoplasmic portion of the chain corresponds to 99–153 (LSKKEEKERQKENESRILVANEAQTEVHSSATKKIRIQGPLMCTYTTSVVFKSIF). The chain crosses the membrane as a helical span at residues 154–176 (EAGFLLGQWYIYGFVMSPIFVCE). Residues 177–207 (RIPCKHKVECFVSRPMEKTIFIIFMLVVSLI) lie on the Extracellular side of the membrane. The helical transmembrane segment at 208–230 (SLLLNLMELIHLSFKCFQHGIKE) threads the bilayer. Topologically, residues 231–334 (GATCSPTGIP…HQTSSKQQYV (104 aa)) are cytoplasmic.

The protein belongs to the connexin family. Alpha-type (group II) subfamily. In terms of assembly, a connexon is composed of a hexamer of connexins. As to expression, resides primarily in the ovary, oocytes and early embryos.

Its subcellular location is the cell membrane. It localises to the cell junction. It is found in the gap junction. Its function is as follows. One gap junction consists of a cluster of closely packed pairs of transmembrane channels, the connexons, through which materials of low MW diffuse from one cell to a neighboring cell. This Xenopus laevis (African clawed frog) protein is Gap junction alpha-2 protein (gja2).